The chain runs to 415 residues: Glutamyl-tRNA reductase (415 aa).

Substrate contacts are provided by residues 49-52, S104, 109-111, and Q115; these read TCNR and EPQ. The active-site Nucleophile is C50. NADP(+) is bound at residue 184-189; sequence GAGEMI.

Belongs to the glutamyl-tRNA reductase family. In terms of assembly, homodimer.

It catalyses the reaction (S)-4-amino-5-oxopentanoate + tRNA(Glu) + NADP(+) = L-glutamyl-tRNA(Glu) + NADPH + H(+). Its pathway is porphyrin-containing compound metabolism; protoporphyrin-IX biosynthesis; 5-aminolevulinate from L-glutamyl-tRNA(Glu): step 1/2. In terms of biological role, catalyzes the NADPH-dependent reduction of glutamyl-tRNA(Glu) to glutamate 1-semialdehyde (GSA). The protein is Glutamyl-tRNA reductase of Neisseria meningitidis serogroup B (strain ATCC BAA-335 / MC58).